The following is a 359-amino-acid chain: MEEITQHFGVGASSHGHGHGQHHHHHHHHHPWASSLSAVVAPLPPQPPSAGLPLTLNTVAATGNSGGSGNPVLQLANGGGLLDACVKAKEPSSSSPYAGDVEAIKAKIISHPHYYSLLTAYLECNKVGAPPEVSARLTEIAQEVEARQRTALGGLAAATEPELDQFMEAYHEMLVKFREELTRPLQEAMEFMRRVESQLNSLSISGRSLRNILSSGSSEEDQEGSGGETELPEVDAHGVDQELKHHLLKKYSGYLSSLKQELSKKKKKGKLPKEARQQLLSWWDQHYKWPYPSETQKVALAESTGLDLKQINNWFINQRKRHWKPSEEMHHLMMDGYHTTNAFYMDGHFINDGGLYRLG.

2 disordered regions span residues 1–34 (MEEITQHFGVGASSHGHGHGQHHHHHHHHHPWAS) and 213–232 (LSSGSSEEDQEGSGGETELP). Over residues 16-31 (GHGHGQHHHHHHHHHP) the composition is skewed to basic residues. Positions 242 to 262 (ELKHHLLKKYSGYLSSLKQEL) constitute an ELK domain. A DNA-binding region (homeobox; TALE-type) is located at residues 263-326 (SKKKKKGKLP…NQRKRHWKPS (64 aa)).

It belongs to the TALE/KNOX homeobox family. In terms of assembly, forms homodimers. Binds to MBP2C; this interaction reduces RNA binding capacity. Expressed in apical meristems of vegetative and floral stems as well as in the underlying ground meristem. Specifically expressed in vascular bundles developing both in the leaf and stem. Very low levels of expression in leaves.

It is found in the nucleus. It localises to the cell junction. Its subcellular location is the plasmodesma. The protein resides in the cytoplasm. In terms of biological role, binds to RNA. Possible transcription factor that regulates genes involved in development. Mutations in KN-1 alter leaf development. Foci of cells along the lateral vein do not differentiate properly but continue to divide, forming knots. May participate in the switch from indeterminate to determinate cell fates. Probably binds to the DNA sequence 5'-TGAC-3'. The protein is Homeotic protein knotted-1 (KN-1) of Zea mays (Maize).